Consider the following 169-residue polypeptide: MTIQTLFAASHHIYLGNALWYLICFAILLLLIKHFAWGPVSDMMEKRRQKVINDLDSAASDRKKAETLANEREAALKNSRQEATQILSDAKANAQKTGKEIVASANEDAAAIRKKANEEAAKAKSDALDSARDQVADISLAIAEKVIAKNLSAEDQKDLVDQFIKELDD.

A helical membrane pass occupies residues 12–32 (HIYLGNALWYLICFAILLLLI).

The protein belongs to the ATPase B chain family. In terms of assembly, F-type ATPases have 2 components, F(1) - the catalytic core - and F(0) - the membrane proton channel. F(1) has five subunits: alpha(3), beta(3), gamma(1), delta(1), epsilon(1). F(0) has three main subunits: a(1), b(2) and c(10-14). The alpha and beta chains form an alternating ring which encloses part of the gamma chain. F(1) is attached to F(0) by a central stalk formed by the gamma and epsilon chains, while a peripheral stalk is formed by the delta and b chains.

The protein resides in the cell membrane. In terms of biological role, f(1)F(0) ATP synthase produces ATP from ADP in the presence of a proton or sodium gradient. F-type ATPases consist of two structural domains, F(1) containing the extramembraneous catalytic core and F(0) containing the membrane proton channel, linked together by a central stalk and a peripheral stalk. During catalysis, ATP synthesis in the catalytic domain of F(1) is coupled via a rotary mechanism of the central stalk subunits to proton translocation. Component of the F(0) channel, it forms part of the peripheral stalk, linking F(1) to F(0). This is ATP synthase subunit b from Lactobacillus helveticus (strain DPC 4571).